Consider the following 232-residue polypeptide: 2,3,4,5-tetrahydropyridine-2,6-dicarboxylate N-acetyltransferase (232 aa).

It belongs to the transferase hexapeptide repeat family. DapH subfamily.

The enzyme catalyses (S)-2,3,4,5-tetrahydrodipicolinate + acetyl-CoA + H2O = L-2-acetamido-6-oxoheptanedioate + CoA. It participates in amino-acid biosynthesis; L-lysine biosynthesis via DAP pathway; LL-2,6-diaminopimelate from (S)-tetrahydrodipicolinate (acetylase route): step 1/3. Functionally, catalyzes the transfer of an acetyl group from acetyl-CoA to tetrahydrodipicolinate. The chain is 2,3,4,5-tetrahydropyridine-2,6-dicarboxylate N-acetyltransferase from Streptococcus pneumoniae serotype 4 (strain ATCC BAA-334 / TIGR4).